The sequence spans 371 residues: Cytochrome b (371 aa).

Helical transmembrane passes span F25–I45, W69–I90, W105–L125, and F170–I190. Heme b is bound by residues H75 and H89. Residues H174 and H188 each coordinate heme b. H193 contributes to the a ubiquinone binding site. The next 4 membrane-spanning stretches (helical) occupy residues Y218–T238, L280–H300, L312–S332, and F339–P358.

Belongs to the cytochrome b family. In terms of assembly, the cytochrome bc1 complex contains 3 respiratory subunits (MT-CYB, CYC1 and UQCRFS1), 2 core proteins (UQCRC1 and UQCRC2) and probably 6 low-molecular weight proteins. Heme b is required as a cofactor.

The protein resides in the mitochondrion inner membrane. Component of the ubiquinol-cytochrome c reductase complex (complex III or cytochrome b-c1 complex) that is part of the mitochondrial respiratory chain. The b-c1 complex mediates electron transfer from ubiquinol to cytochrome c. Contributes to the generation of a proton gradient across the mitochondrial membrane that is then used for ATP synthesis. The polypeptide is Cytochrome b (MT-CYB) (Sinomicrurus macclellandi (Macclelland's coral snake)).